Consider the following 417-residue polypeptide: Lipoyl synthase, mitochondrial (417 aa).

A mitochondrion-targeting transit peptide spans 1-30 (MATSIPRSRCFLTSSTLKVVPRSRTPLRSF). The interval 23–62 (SRTPLRSFATTSDTPQTSVPEAPGKRSRPPTSFSDTLNAG) is disordered. Composition is skewed to polar residues over residues 30 to 41 (FATTSDTPQTSV) and 51 to 61 (PPTSFSDTLNA). [4Fe-4S] cluster-binding residues include Cys-132, Cys-137, Cys-143, Cys-163, Cys-167, Cys-170, and Ser-378. In terms of domain architecture, Radical SAM core spans 146 to 367 (GSSKSAATAT…RQRALDMGFL (222 aa)).

The protein belongs to the radical SAM superfamily. Lipoyl synthase family. The cofactor is [4Fe-4S] cluster.

It is found in the mitochondrion. The catalysed reaction is [[Fe-S] cluster scaffold protein carrying a second [4Fe-4S](2+) cluster] + N(6)-octanoyl-L-lysyl-[protein] + 2 oxidized [2Fe-2S]-[ferredoxin] + 2 S-adenosyl-L-methionine + 4 H(+) = [[Fe-S] cluster scaffold protein] + N(6)-[(R)-dihydrolipoyl]-L-lysyl-[protein] + 4 Fe(3+) + 2 hydrogen sulfide + 2 5'-deoxyadenosine + 2 L-methionine + 2 reduced [2Fe-2S]-[ferredoxin]. The protein operates within protein modification; protein lipoylation via endogenous pathway; protein N(6)-(lipoyl)lysine from octanoyl-[acyl-carrier-protein]: step 2/2. Functionally, catalyzes the radical-mediated insertion of two sulfur atoms into the C-6 and C-8 positions of the octanoyl moiety bound to the lipoyl domains of lipoate-dependent enzymes, thereby converting the octanoylated domains into lipoylated derivatives. The polypeptide is Lipoyl synthase, mitochondrial (Pyrenophora tritici-repentis (strain Pt-1C-BFP) (Wheat tan spot fungus)).